The chain runs to 168 residues: G/U mismatch-specific DNA glycosylase (168 aa).

The protein belongs to the uracil-DNA glycosylase (UDG) superfamily. TDG/mug family. Binds DNA as a monomer.

Its subcellular location is the cytoplasm. It catalyses the reaction Specifically hydrolyzes mismatched double-stranded DNA and polynucleotides, releasing free uracil.. Its function is as follows. Excises ethenocytosine and uracil, which can arise by alkylation or deamination of cytosine, respectively, from the corresponding mispairs with guanine in ds-DNA. It is capable of hydrolyzing the carbon-nitrogen bond between the sugar-phosphate backbone of the DNA and the mispaired base. The complementary strand guanine functions in substrate recognition. Required for DNA damage lesion repair in stationary-phase cells. The sequence is that of G/U mismatch-specific DNA glycosylase from Enterobacter sp. (strain 638).